The chain runs to 95 residues: UPF0358 protein BCE_3996 (95 aa).

Belongs to the UPF0358 family.

The chain is UPF0358 protein BCE_3996 from Bacillus cereus (strain ATCC 10987 / NRS 248).